The sequence spans 434 residues: D-amino acid dehydrogenase (434 aa).

Valine 3–tryptophan 17 is a binding site for FAD.

It belongs to the DadA oxidoreductase family. FAD serves as cofactor.

The catalysed reaction is a D-alpha-amino acid + A + H2O = a 2-oxocarboxylate + AH2 + NH4(+). It participates in amino-acid degradation; D-alanine degradation; NH(3) and pyruvate from D-alanine: step 1/1. Functionally, oxidative deamination of D-amino acids. The polypeptide is D-amino acid dehydrogenase (Yersinia pseudotuberculosis serotype O:1b (strain IP 31758)).